The following is a 489-amino-acid chain: UDP-N-acetylmuramate--L-alanine ligase (489 aa).

128 to 134 (GTHGKTT) contributes to the ATP binding site.

The protein belongs to the MurCDEF family.

It localises to the cytoplasm. The enzyme catalyses UDP-N-acetyl-alpha-D-muramate + L-alanine + ATP = UDP-N-acetyl-alpha-D-muramoyl-L-alanine + ADP + phosphate + H(+). It participates in cell wall biogenesis; peptidoglycan biosynthesis. Functionally, cell wall formation. The chain is UDP-N-acetylmuramate--L-alanine ligase from Shewanella woodyi (strain ATCC 51908 / MS32).